A 775-amino-acid chain; its full sequence is 5-methyltetrahydropteroyltriglutamate--homocysteine methyltransferase (775 aa).

5-methyltetrahydropteroyltri-L-glutamate is bound by residues 15–18 (RELK) and Lys-118. L-homocysteine-binding positions include 448-450 (IGS) and Glu-501. Residues 448–450 (IGS) and Glu-501 each bind L-methionine. 5-methyltetrahydropteroyltri-L-glutamate is bound by residues 532–533 (RC) and Trp-578. Asp-616 lines the L-homocysteine pocket. Asp-616 is an L-methionine binding site. Residue Glu-622 coordinates 5-methyltetrahydropteroyltri-L-glutamate. Zn(2+)-binding residues include His-658, Cys-660, and Glu-682. His-711 serves as the catalytic Proton donor. Residue Cys-743 participates in Zn(2+) binding.

Belongs to the vitamin-B12 independent methionine synthase family. Zn(2+) serves as cofactor.

It carries out the reaction 5-methyltetrahydropteroyltri-L-glutamate + L-homocysteine = tetrahydropteroyltri-L-glutamate + L-methionine. Its pathway is amino-acid biosynthesis; L-methionine biosynthesis via de novo pathway; L-methionine from L-homocysteine (MetE route): step 1/1. Its function is as follows. Catalyzes the transfer of a methyl group from 5-methyltetrahydrofolate to homocysteine resulting in methionine formation. This chain is 5-methyltetrahydropteroyltriglutamate--homocysteine methyltransferase, found in Cytophaga hutchinsonii (strain ATCC 33406 / DSM 1761 / CIP 103989 / NBRC 15051 / NCIMB 9469 / D465).